We begin with the raw amino-acid sequence, 266 residues long: Chymotrypsin-like elastase family member 1 (266 aa).

The first 16 residues, 1–16 (MLRLLVFTSLVLYGHS), serve as a signal peptide directing secretion. Residues 17–26 (TQDFPETNAR) constitute a propeptide, activation peptide. The Peptidase S1 domain maps to 27–264 (VVGGTAVSKN…YISWINNAIA (238 aa)). C56 and C72 form a disulfide bridge. The active-site Charge relay system is H71. Positions 85, 87, 90, and 95 each coordinate Ca(2+). N87 carries N-linked (GlcNAc...) asparagine glycosylation. D119 (charge relay system) is an active-site residue. 3 disulfide bridges follow: C153–C220, C184–C200, and C210–C240. S214 (charge relay system) is an active-site residue. The N-linked (GlcNAc...) asparagine glycan is linked to N241.

The protein belongs to the peptidase S1 family. Elastase subfamily. Requires Ca(2+) as cofactor. As to expression, pancreas.

It localises to the secreted. It carries out the reaction Hydrolysis of proteins, including elastin. Preferential cleavage: Ala-|-Xaa.. In terms of biological role, serine proteases that hydrolyze many proteins in addition to elastin. This Bos taurus (Bovine) protein is Chymotrypsin-like elastase family member 1 (CELA1).